Consider the following 380-residue polypeptide: MHSKHPTDTARRCETGTDSSDTAADDYSLAGYRFELPEEQIAQHPPEHRGASRLFVMDRKSGVNTQASFKDIGSFLPEGALLVANNSRVLPARMLGRRPTGGKVEFLLLTPLPLVQPQTGTDGRSCAEAEGLLRASKRVRPGDVMHFDGLDVEVLHTADFGRCAVRMHWKGDLAGLFLRQGHLPLPPYIRRPDGEDDHSRYQTVYSRQDRLGSVAAPTAGLHFTPELTASLQEQGFGWAEVTLYVGYGTFSPVRAEDIRTHTMHREYMEITEQAAQAINDAKRQGRPVVTVGTTSTRVLEGAWAACGEIRPFTGWTDIFIYPGYRFNVADHIITNFHLPESSLLMMISAFAGREKTLQAYSQAVAAGYRFFSYGDAMLIL.

The span at 1 to 15 (MHSKHPTDTARRCET) shows a compositional bias: basic and acidic residues. The disordered stretch occupies residues 1–24 (MHSKHPTDTARRCETGTDSSDTAA).

The protein belongs to the QueA family. Monomer.

The protein resides in the cytoplasm. The catalysed reaction is 7-aminomethyl-7-carbaguanosine(34) in tRNA + S-adenosyl-L-methionine = epoxyqueuosine(34) in tRNA + adenine + L-methionine + 2 H(+). The protein operates within tRNA modification; tRNA-queuosine biosynthesis. Transfers and isomerizes the ribose moiety from AdoMet to the 7-aminomethyl group of 7-deazaguanine (preQ1-tRNA) to give epoxyqueuosine (oQ-tRNA). This is S-adenosylmethionine:tRNA ribosyltransferase-isomerase from Oleidesulfovibrio alaskensis (strain ATCC BAA-1058 / DSM 17464 / G20) (Desulfovibrio alaskensis).